The primary structure comprises 281 residues: Pantothenate synthetase (281 aa).

31-38 (MGNLHAGH) is an ATP binding site. Histidine 38 serves as the catalytic Proton donor. Glutamine 62 lines the (R)-pantoate pocket. Residue glutamine 62 coordinates beta-alanine. An ATP-binding site is contributed by 150–153 (GKKD). Glutamine 156 is a (R)-pantoate binding site. ATP-binding positions include valine 179 and 187 to 190 (MSSR).

It belongs to the pantothenate synthetase family. In terms of assembly, homodimer.

It localises to the cytoplasm. It catalyses the reaction (R)-pantoate + beta-alanine + ATP = (R)-pantothenate + AMP + diphosphate + H(+). It participates in cofactor biosynthesis; (R)-pantothenate biosynthesis; (R)-pantothenate from (R)-pantoate and beta-alanine: step 1/1. Functionally, catalyzes the condensation of pantoate with beta-alanine in an ATP-dependent reaction via a pantoyl-adenylate intermediate. In Xylella fastidiosa (strain M12), this protein is Pantothenate synthetase.